The chain runs to 113 residues: MTKADIIESVYEKVGFSKKEAAEIVEMVFDTIKETLERGEKIKISGFGNFIVRDKKSRVGRNPQTGEEIEISARRVLTFRPSQVLKNALNGEVSDETTEGADDDDDEEGEGDE.

Residues 87–113 (NALNGEVSDETTEGADDDDDEEGEGDE) are disordered. The segment covering 93 to 113 (VSDETTEGADDDDDEEGEGDE) has biased composition (acidic residues).

It belongs to the bacterial histone-like protein family. Heterodimer of an alpha and a beta chain.

Its function is as follows. This protein is one of the two subunits of integration host factor, a specific DNA-binding protein that functions in genetic recombination as well as in transcriptional and translational control. The protein is Integration host factor subunit alpha of Anaeromyxobacter dehalogenans (strain 2CP-1 / ATCC BAA-258).